An 871-amino-acid polypeptide reads, in one-letter code: Serrate RNA effector molecule homolog (871 aa).

The tract at residues M1–D90 is disordered. The residue at position 2 (G2) is an N-acetylglycine. Phosphoserine is present on S4. The residue at position 8 (Y8) is a Phosphotyrosine. A compositionally biased stretch (basic and acidic residues) spans Y8–L73. Phosphoserine is present on residues S67, S74, and S136. K150 participates in a covalent cross-link: Glycyl lysine isopeptide (Lys-Gly) (interchain with G-Cter in SUMO2). A disordered region spans residues E272 to C411. The span at D297–K347 shows a compositional bias: basic and acidic residues. A compositionally biased stretch (acidic residues) spans S370 to E385. The span at A386 to C411 shows a compositional bias: basic and acidic residues. 2 positions are modified to phosphoserine: S492 and S539. A Phosphothreonine modification is found at T543. The residue at position 569 (S569) is a Phosphoserine. Residues E574–N597 form a disordered region. T670 bears the Phosphothreonine mark. S678 is subject to Phosphoserine. Omega-N-methylarginine is present on residues R828, R835, and R845. The tract at residues N830–V849 is disordered.

This sequence belongs to the ARS2 family. In terms of assembly, interacts with CASP8AP2, ERBB4, NCBP1/CBP80 and DROSHA. Interacts with LUZP4. Interacts with NCBP2/CBP20 and NCBP3. Interacts with MTREX.

It localises to the nucleus. Its subcellular location is the nucleoplasm. It is found in the cytoplasm. Its function is as follows. Acts as a mediator between the cap-binding complex (CBC) and the primary microRNAs (miRNAs) processing machinery during cell proliferation. Contributes to the stability and delivery of capped primary miRNA transcripts to the primary miRNA processing complex containing DGCR8 and DROSHA, thereby playing a role in RNA-mediated gene silencing (RNAi) by miRNAs. Binds capped RNAs (m7GpppG-capped RNA); however interaction is probably mediated via its interaction with NCBP1/CBP80 component of the CBC complex. Involved in cell cycle progression at S phase. Does not directly confer arsenite resistance but rather modulates arsenic sensitivity. Independently of its activity on miRNAs, necessary and sufficient to promote neural stem cell self-renewal. Does so by directly binding SOX2 promoter and positively regulating its transcription. This chain is Serrate RNA effector molecule homolog (SRRT), found in Pongo abelii (Sumatran orangutan).